The following is a 1222-amino-acid chain: Probable disease resistance protein At5g45510 (1222 aa).

Position 49–56 (49–56 (GEAGIGKT)) interacts with ATP. Residues 122-183 (GERDEDEEEE…KLEAEKKLVD (62 aa)) adopt a coiled-coil conformation. Composition is skewed to basic and acidic residues over residues 171-205 (AAEK…KEKT), 212-224 (GEDK…ERKP), 263-279 (RRQE…HAEG), and 286-322 (SGEK…HEKV). Disordered regions lie at residues 171-225 (AAEK…RKPY) and 263-327 (RRQE…PPTI). At Thr293 the chain carries Phosphothreonine. 11 LRR repeats span residues 654 to 676 (LLRV…KALT), 677 to 699 (KLNT…FFES), 702 to 724 (ELRS…SGLK), 725 to 747 (ELHC…QELV), 785 to 806 (KLQH…QDSA), 813 to 835 (SLTR…KPLS), 836 to 856 (GLQI…EVCF), 861 to 883 (ELKT…EDLS), 884 to 906 (SLNE…EKLE), 907 to 929 (NLEV…FEKM), and 931 to 951 (YLRV…PADT).

Belongs to the disease resistance NB-LRR family.

Probable disease resistance protein. This is Probable disease resistance protein At5g45510 from Arabidopsis thaliana (Mouse-ear cress).